The following is a 645-amino-acid chain: MNRQRLLKIWCLKKLGETHRCYSSAGDPTKLINFSEFTPEKIRNFGIVAHVDHGKSTLADRLLELCGAVPPGQQQMLDKLQVERERGITVKAQTAALKYQGYLLNLIDTPGHVDFSAEVSRSLAVCDGILLLVAANQGVQAQTIANFWLAFEKNIQIIPVINKIDLPGADIKSVETQLKNLFEFNSEECLHISAKSGLNVEKVLDAIVERVPAPTANVEAPFRAMIFDSYFDHFRGAIAHIVVKEGSVKKGDKIRSYQNDKSYDVSEVGVMRPEMVKCTEVRAGQVGYLVCNMRTVKEAVVGETLFAAETPKESVQSFAEIKGVKATVYAGLFPVETADYESLKQAVERLCLNDPSVTVTPDASKALGLGWRIGFLGVLHMEVFGARLSQEYDASVILCQPSVEYRAKIKDNENIRKKRYDGMEEVRILDPSKFPEESDVDSFLEPMVKVRMIVPNEMMGTVNGLCSECRGERGEISSIDTSRLMILWRLPLAEVAVDFFERLKKLTSGYASFDYEPDGWQETRLVKLTILINGKEVSEFSQILPAAMARDRAKTLVQRLKREIPRQQFEVTIKACIGSSTKALSQIVIQPMKRDFSQLLKGNFGGGGMERLNKKLSHQKKGKERMKMVGNIQIPKEAFLNVLKN.

In terms of domain architecture, tr-type G spans 40 to 215 (EKIRNFGIVA…AIVERVPAPT (176 aa)). GTP contacts are provided by residues 49-56 (AHVDHGKS), 108-112 (DTPGH), and 162-165 (NKID).

This sequence belongs to the TRAFAC class translation factor GTPase superfamily. Classic translation factor GTPase family. LepA subfamily.

The protein localises to the mitochondrion inner membrane. The enzyme catalyses GTP + H2O = GDP + phosphate + H(+). Promotes mitochondrial protein synthesis. May act as a fidelity factor of the translation reaction, by catalyzing a one-codon backward translocation of tRNAs on improperly translocated ribosomes. Binds to mitochondrial ribosomes in a GTP-dependent manner. This chain is Translation factor GUF1 homolog, mitochondrial, found in Caenorhabditis briggsae.